Here is a 102-residue protein sequence, read N- to C-terminus: Monothiol glutaredoxin-S10 (102 aa).

The Glutaredoxin domain maps to 1-101; sequence MDVVARLASQ…ILLKEAGALW (101 aa). Cysteine 21 lines the [2Fe-2S] cluster pocket. The short motif at 99–102 is the Responsive for interaction with TGA factors element; it reads ALWL.

Belongs to the glutaredoxin family. CC-type subfamily.

It localises to the cytoplasm. The protein localises to the nucleus. May only reduce GSH-thiol disulfides, but not protein disulfides. The polypeptide is Monothiol glutaredoxin-S10 (GRXS10) (Arabidopsis thaliana (Mouse-ear cress)).